The chain runs to 495 residues: MTASTLKTLSAQLAAKEVSAVELARHYLARIEARADLNAFIHVDPEATLAQAQAADARLAAGDAGPLAGIPIAHKDVFVTRGWRATAGSKMLDSYVSPFDATVVERLAAAGMVTLGKTNMDEFAMGSSNENSHFGPVKNPWDVARVPGGSSGGSAAAVAADLAPAATGTDTGGSIRQPASFSGITGIKPTYGRVSRYGMIAFASSLDQGGPMARTAEDCALLLSAMAGFDARDSTSLEPGRGGDAEDFGRLLGRPLEGADAARPLAGLRIGLPQEYFGAGLADDVRTAVRAALAELETLGATLVDISLPKTELSIPTYYVIAPAEASSNLSRFDGVRYGHRAAAYRDLADMYRKTRAEGFGWEVKRRILVGTYVLSHGYYDAYYLQAQKIRRIIAQDFQNAFGQCDVIMGPVAPTVAWKLGEKTDDPLQMYLADIFTLSTSLAGLPGMSVPAGFGANGLPVGLQIIGNYFEEARMLQIAHAFQQATDWHTRRPAA.

Catalysis depends on charge relay system residues Lys-75 and Ser-150. Catalysis depends on Ser-174, which acts as the Acyl-ester intermediate.

The protein belongs to the amidase family. GatA subfamily. As to quaternary structure, heterotrimer of A, B and C subunits.

It catalyses the reaction L-glutamyl-tRNA(Gln) + L-glutamine + ATP + H2O = L-glutaminyl-tRNA(Gln) + L-glutamate + ADP + phosphate + H(+). Its function is as follows. Allows the formation of correctly charged Gln-tRNA(Gln) through the transamidation of misacylated Glu-tRNA(Gln) in organisms which lack glutaminyl-tRNA synthetase. The reaction takes place in the presence of glutamine and ATP through an activated gamma-phospho-Glu-tRNA(Gln). The polypeptide is Glutamyl-tRNA(Gln) amidotransferase subunit A (Ralstonia nicotianae (strain ATCC BAA-1114 / GMI1000) (Ralstonia solanacearum)).